The primary structure comprises 769 residues: Multiple RNA-binding domain-containing protein 1 (769 aa).

Residues 24-102 enclose the RRM 1 domain; the sequence is SRLIFLNLPS…GKVKVDFVKD (79 aa). 2 disordered regions span residues 105 to 139 and 151 to 191; these read LKTG…NKRL and PAMA…DDDA. Residues 165 to 178 show a composition bias toward basic and acidic residues; that stretch reads GTKKEKSVKGKEKS. Residues 179-191 are compositionally biased toward acidic residues; the sequence is EEPEEAEADDDDA. RRM domains are found at residues 221–299, 417–489, and 535–618; these read SRLF…PGRA, TTIL…KGPV, and STLF…FAQR. The tract at residues 617–637 is disordered; the sequence is QRGAEDDRETKKGGDAEGGKT. Residues 619 to 636 show a composition bias toward basic and acidic residues; the sequence is GAEDDRETKKGGDAEGGK. One can recognise an RRM 5 domain in the interval 640–723; it reads TKVLVKNLPF…RHLVLQWANE (84 aa). Residues 740 to 769 form a disordered region; sequence VRGMEDGGDRKRRKLDFKGGKEDEMDGLEV.

It belongs to the RRM MRD1 family.

The protein localises to the nucleus. Its function is as follows. Involved in pre-rRNA processing. The polypeptide is Multiple RNA-binding domain-containing protein 1 (MRD1) (Cryptococcus neoformans var. neoformans serotype D (strain B-3501A) (Filobasidiella neoformans)).